A 700-amino-acid chain; its full sequence is MSRATPIQNYRNIGISAHIDAGKTTTTERILFYTGVNHKIGEVHDGAATMDWMEQEQERGITITSAATTCFWKGMDTSLPEHRINIIDTPGHVDFTIEVERSMRVLDGACMVYCAVGGVQPQSETVWRQANKYKVPRLAFVNKMDRTGANFFKVVEQMKLRLKASPVPMVIPIGAEENFTGVVDLLKMKAIIWDEASQGMKFTYSEIPAELVELAKEWREKMVEAAAESSEELMNKYLEEGDLTEAEIKLGIRTRTIASEIQPMYCGSAFKNKGVQRMLDAVIEFMPSPIDIPPVKGMDEDEAPVTRKADDEEKFSALAFKLMTDPFVGQLTFVRVYSGVLKKGDSVYNPIKGKKERIGRIVQMHANNREEVSEIRAGDIAACVGLKDVTTGETLCDPDAIVMLERMVFPEPVITQAVEPKTKADQEKMGIALQRLAQEDPSFRVKTDEESGQTLIAGMGELHLEIIVDRMKREFGVEANVGKPQVAYRETIRKTVEDAEGKFVRQSGGKGQYGHVVLKIEPNEAGKGIEFVDAIKGGVVPREYIPAVEKGINEAVTSGVLAGYPVVDVKVTLHFGSYHDVDSNELAFKMAAIFGFKEGCRKASPVILEPMMAVEVETPEDYAGNVMGDLSSRRGMVQGMEDMVGGGKAIKAEVPLSEMFGYSTTLRSMSQGRATYSMEFKHYSEAPRNVSEAIMASRAK.

Residues Q8–I290 enclose the tr-type G domain. GTP contacts are provided by residues A17–T24, D88–H92, and N142–D145.

The protein belongs to the TRAFAC class translation factor GTPase superfamily. Classic translation factor GTPase family. EF-G/EF-2 subfamily.

It is found in the cytoplasm. In terms of biological role, catalyzes the GTP-dependent ribosomal translocation step during translation elongation. During this step, the ribosome changes from the pre-translocational (PRE) to the post-translocational (POST) state as the newly formed A-site-bound peptidyl-tRNA and P-site-bound deacylated tRNA move to the P and E sites, respectively. Catalyzes the coordinated movement of the two tRNA molecules, the mRNA and conformational changes in the ribosome. This Polaromonas sp. (strain JS666 / ATCC BAA-500) protein is Elongation factor G 1.